The chain runs to 755 residues: MKKQRKILWRKGIHLAFSEKWNTGFGGFKKFYFHQHLCILKAKLGRPVTWNRQLRHFQGRKKALQIQKTWIKDEPLCAKTKFNVATQNVSTLSSKVKRKDAKHFISSSKTLLRLQAEKLLSSAKNSDHEYCREKNLLKAVTDFPSNSALGQANGHRPRTDPQPSDFPMKFNGESQSPGESGTIVVTLNNHKRKGFCYGCCQGPEHHRNGGPLIPKKFQLNQHRRIKLSPLMMYEKLSMIRFRYRILRSQHFRTKSKVCKLRKAQRSWVQKVTGDHQETRRENGEGGSCSPFPSPEPKDPSCRHQPYFPDMDSSAVVKGTNSHVPDCHTKGSSFLGKELSLDEAFPDQQNGSATNAWDQSSCSSPKWECTELIHDIPLPEHRSNTMFISETEREIMTLGQENQTSSVSDDRVKLSVSGADTSVSSVDGPVSQKAVQNENSYQMEEDGSLKQSILSSELLDHPYCKSPLEAPLVCSGLKLENQVGGGKNSQKASPVDDEQLSVCLSGFLDEVMKKYGSLVPLSEKEVLGRLKDVFNEDFSNRKPFINREITNYRARHQKCNFRIFYNKHMLDMDDLATLDGQNWLNDQVINMYGELIMDAVPDKVHFFNSFFHRQLVTKGYNGVKRWTKKVDLFKKSLLLIPIHLEVHWSLITVTLSNRIISFYDSQGIHFKFCVENIRKYLLTEAREKNRPEFLQGWQTAVTKCIPQQKNDSDCGVFVLQYCKCLALEQPFQFSQEDMPRVRKRIYKELCECRLMD.

The disordered stretch occupies residues Val-268–Ser-321. Residues Thr-272–Gly-283 are compositionally biased toward basic and acidic residues. Positions His-567–Leu-724 are protease. Catalysis depends on residues His-646, Asp-663, and Cys-713.

This sequence belongs to the peptidase C48 family. In terms of assembly, interacts with CCAR2.

It is found in the nucleus. The protein localises to the nucleolus. Protease that catalyzes two essential functions in the SUMO pathway: processing of full-length SUMO3 to its mature form and deconjugation of SUMO2 and SUMO3 from targeted proteins. Has weak proteolytic activity against full-length SUMO1 or SUMO1 conjugates. Required for cell division. The protein is Sentrin-specific protease 5 (SENP5) of Homo sapiens (Human).